The following is a 188-amino-acid chain: MPVTPTSLADHLLVALPSLLDATFARSVALICQHDENGAMGVLVNQPSEYTLGEVLAQMDITTGDGDLQARMVLNGGPVHPERGFVIHDDARAWDSSLIVGEGLYLTTSRDILEAMARGEGPANAVVTLGCAGWGAGQLESELSENSWLTVPADAELVFQLPLEQRWQGAASRIGVDLFRLTDYSGHV.

It belongs to the UPF0301 (AlgH) family.

In Stenotrophomonas maltophilia (strain R551-3), this protein is UPF0301 protein Smal_0940.